The primary structure comprises 591 residues: Monoterpene synthase 8, chloroplastic (591 aa).

The N-terminal 46 residues, 1–46 (MSLLLAPPSYFPFRGLRRSTAAKQPPCLRLVKCTADRQSPEAARRS), are a transit peptide targeting the chloroplast. Residues D346, D350, and E497 each contribute to the Mg(2+) site. A DDXXD motif motif is present at residues 346-350 (DDVYD).

This sequence belongs to the terpene synthase family. Tpsa subfamily. Mg(2+) serves as cofactor. Mn(2+) is required as a cofactor. Highly expressed in flowers, petals and sepals, but almost undetectable in vegetative organs.

The protein resides in the plastid. The protein localises to the chloroplast. It carries out the reaction (2E)-geranyl diphosphate + H2O = (R)-linalool + diphosphate. It catalyses the reaction (2E)-geranyl diphosphate + H2O = (S)-linalool + diphosphate. The enzyme catalyses (2E,6E)-farnesyl diphosphate = (S)-beta-bisabolene + diphosphate. The catalysed reaction is (2E,6E)-farnesyl diphosphate = (E,R)-alpha-bisabolene + diphosphate. It carries out the reaction (2E,6E)-farnesyl diphosphate = (E)-beta-farnesene + diphosphate. It catalyses the reaction (2E,6E)-farnesyl diphosphate = beta-sesquiphellandrene + diphosphate. The enzyme catalyses (2E,6E)-farnesyl diphosphate = (1S,5S,6R)-alpha-bergamotene + diphosphate. The protein operates within secondary metabolite biosynthesis; terpenoid biosynthesis. Sesquiterpene and monoterpene synthase involved in the biosynthesis of volatile compounds present in floral scent. Mediates the conversion of (2E)-geranyl diphosphate (GPP) into linalool, with trace levels of myrcene, limonene and (Z)-beta-ocimene. Also acts as a sesquiterpene synthase by catalyzing the conversion of farnesyl diphosphate (FPP) to alpha-bergamotene and beta-bisabolene and to minor products including alpha-curcumene, cis-alpha-bisabolene, beta-farnesene and beta-sesquiphellandrene, as well as seven other unidentified sesquiterpenes. This chain is Monoterpene synthase 8, chloroplastic, found in Hedychium coronarium (White butterfly ginger-lily).